The sequence spans 195 residues: Ribosomal RNA small subunit methyltransferase G (195 aa).

S-adenosyl-L-methionine contacts are provided by residues G60, L65, 114-115 (IE), and R128.

This sequence belongs to the methyltransferase superfamily. RNA methyltransferase RsmG family.

It localises to the cytoplasm. The enzyme catalyses guanosine(527) in 16S rRNA + S-adenosyl-L-methionine = N(7)-methylguanosine(527) in 16S rRNA + S-adenosyl-L-homocysteine. Its function is as follows. Specifically methylates the N7 position of guanine in position 527 of 16S rRNA. The chain is Ribosomal RNA small subunit methyltransferase G from Dinoroseobacter shibae (strain DSM 16493 / NCIMB 14021 / DFL 12).